The chain runs to 355 residues: Ion-translocating oxidoreductase complex subunit D (355 aa).

Transmembrane regions (helical) follow at residues 23 to 43 (WVAL…GWGT), 44 to 64 (LVQL…VMLF), 78 to 109 (ALVT…IVIA), and 129 to 149 (VVLL…LPLI). FMN phosphoryl threonine is present on Thr194. A run of 5 helical transmembrane segments spans residues 221–241 (FAGV…LILL), 250–270 (IPVG…LFFP), 273–293 (TASP…FFIA), 307–327 (ILFG…GGFP), and 328–348 (DGVA…DYYT).

The protein belongs to the NqrB/RnfD family. As to quaternary structure, the complex is composed of six subunits: RnfA, RnfB, RnfC, RnfD, RnfE and RnfG. It depends on FMN as a cofactor.

The protein resides in the cell inner membrane. Its function is as follows. Part of a membrane-bound complex that couples electron transfer with translocation of ions across the membrane. This is Ion-translocating oxidoreductase complex subunit D from Vibrio vulnificus (strain CMCP6).